We begin with the raw amino-acid sequence, 323 residues long: Quinolinate synthase (323 aa).

Iminosuccinate-binding residues include His39 and Ser56. Cys101 contributes to the [4Fe-4S] cluster binding site. Residues 127-129 and Ser144 each bind iminosuccinate; that span reads YIN. Cys187 serves as a coordination point for [4Fe-4S] cluster. Residues 213 to 215 and Thr230 each bind iminosuccinate; that span reads HPE. Residue Cys280 coordinates [4Fe-4S] cluster.

It belongs to the quinolinate synthase family. Type 2 subfamily. Requires [4Fe-4S] cluster as cofactor.

The protein resides in the cytoplasm. The catalysed reaction is iminosuccinate + dihydroxyacetone phosphate = quinolinate + phosphate + 2 H2O + H(+). The protein operates within cofactor biosynthesis; NAD(+) biosynthesis; quinolinate from iminoaspartate: step 1/1. In terms of biological role, catalyzes the condensation of iminoaspartate with dihydroxyacetone phosphate to form quinolinate. In Chlorobium phaeobacteroides (strain DSM 266 / SMG 266 / 2430), this protein is Quinolinate synthase.